The chain runs to 245 residues: Carbohydrate deacetylase 1 (245 aa).

Mg(2+) is bound by residues histidine 59 and histidine 125.

Belongs to the YdjC deacetylase family. In terms of assembly, homodimer. Mg(2+) is required as a cofactor.

Functionally, probably catalyzes the deacetylation of acetylated carbohydrates an important step in the degradation of oligosaccharides. This chain is Carbohydrate deacetylase 1, found in Listeria innocua serovar 6a (strain ATCC BAA-680 / CLIP 11262).